The following is a 236-amino-acid chain: Sugar fermentation stimulation protein homolog (236 aa).

It belongs to the SfsA family.

The polypeptide is Sugar fermentation stimulation protein homolog (Paramagnetospirillum magneticum (strain ATCC 700264 / AMB-1) (Magnetospirillum magneticum)).